The sequence spans 179 residues: UPF0227 protein VS_2073 (179 aa).

Belongs to the UPF0227 family.

This chain is UPF0227 protein VS_2073, found in Vibrio atlanticus (strain LGP32) (Vibrio splendidus (strain Mel32)).